The primary structure comprises 210 residues: Thymidylate kinase (210 aa).

10 to 17 (GLEGAGKT) is an ATP binding site.

The protein belongs to the thymidylate kinase family.

The catalysed reaction is dTMP + ATP = dTDP + ADP. Its function is as follows. Phosphorylation of dTMP to form dTDP in both de novo and salvage pathways of dTTP synthesis. The chain is Thymidylate kinase from Erwinia tasmaniensis (strain DSM 17950 / CFBP 7177 / CIP 109463 / NCPPB 4357 / Et1/99).